An 82-amino-acid polypeptide reads, in one-letter code: Small ribosomal subunit protein bS18 (82 aa).

Belongs to the bacterial ribosomal protein bS18 family. As to quaternary structure, part of the 30S ribosomal subunit. Forms a tight heterodimer with protein bS6.

Functionally, binds as a heterodimer with protein bS6 to the central domain of the 16S rRNA, where it helps stabilize the platform of the 30S subunit. The polypeptide is Small ribosomal subunit protein bS18 (Bifidobacterium longum (strain NCC 2705)).